Here is a 319-residue protein sequence, read N- to C-terminus: Protein StrN (319 aa).

It functions in the pathway antibiotic biosynthesis; streptomycin biosynthesis. This chain is Protein StrN (strN), found in Streptomyces griseus.